Consider the following 221-residue polypeptide: Telomere repeats-binding bouquet formation protein 2 (221 aa).

It belongs to the TERB2 family. As to quaternary structure, component of the MAJIN-TERB1-TERB2 complex, composed of MAJIN, TERB1 and TERB2.

It is found in the chromosome. The protein resides in the telomere. It localises to the nucleus inner membrane. Meiosis-specific telomere-associated protein involved in meiotic telomere attachment to the nucleus inner membrane, a crucial step for homologous pairing and synapsis. Component of the MAJIN-TERB1-TERB2 complex, which promotes telomere cap exchange by mediating attachment of telomeric DNA to the inner nuclear membrane and replacement of the protective cap of telomeric chromosomes: in early meiosis, the MAJIN-TERB1-TERB2 complex associates with telomeric DNA and the shelterin/telosome complex. During prophase, the complex matures and promotes release of the shelterin/telosome complex from telomeric DNA. The polypeptide is Telomere repeats-binding bouquet formation protein 2 (Bos taurus (Bovine)).